Consider the following 265-residue polypeptide: tRNA pseudouridine synthase A (265 aa).

The active-site Nucleophile is Asp-52. Tyr-105 serves as a coordination point for substrate.

It belongs to the tRNA pseudouridine synthase TruA family.

It carries out the reaction uridine(38/39/40) in tRNA = pseudouridine(38/39/40) in tRNA. In terms of biological role, formation of pseudouridine at positions 38, 39 and 40 in the anticodon stem and loop of transfer RNAs. The sequence is that of tRNA pseudouridine synthase A from Archaeoglobus fulgidus (strain ATCC 49558 / DSM 4304 / JCM 9628 / NBRC 100126 / VC-16).